Here is a 165-residue protein sequence, read N- to C-terminus: ATP synthase subunit b (165 aa).

A helical transmembrane segment spans residues 7–27 (GTSLGNLLIVTGSFILLLLLV).

This sequence belongs to the ATPase B chain family. As to quaternary structure, F-type ATPases have 2 components, F(1) - the catalytic core - and F(0) - the membrane proton channel. F(1) has five subunits: alpha(3), beta(3), gamma(1), delta(1), epsilon(1). F(0) has three main subunits: a(1), b(2) and c(10-14). The alpha and beta chains form an alternating ring which encloses part of the gamma chain. F(1) is attached to F(0) by a central stalk formed by the gamma and epsilon chains, while a peripheral stalk is formed by the delta and b chains.

The protein resides in the cell membrane. F(1)F(0) ATP synthase produces ATP from ADP in the presence of a proton or sodium gradient. F-type ATPases consist of two structural domains, F(1) containing the extramembraneous catalytic core and F(0) containing the membrane proton channel, linked together by a central stalk and a peripheral stalk. During catalysis, ATP synthesis in the catalytic domain of F(1) is coupled via a rotary mechanism of the central stalk subunits to proton translocation. In terms of biological role, component of the F(0) channel, it forms part of the peripheral stalk, linking F(1) to F(0). The protein is ATP synthase subunit b of Streptococcus mutans serotype c (strain ATCC 700610 / UA159).